A 104-amino-acid chain; its full sequence is UPF0145 protein STH1265 (104 aa).

The protein belongs to the UPF0145 family.

This is UPF0145 protein STH1265 from Symbiobacterium thermophilum (strain DSM 24528 / JCM 14929 / IAM 14863 / T).